The primary structure comprises 630 residues: tRNA uridine 5-carboxymethylaminomethyl modification enzyme MnmG (630 aa).

14–19 (GGGHAG) contacts FAD. 282-296 (GTRYCPSIEDKVRKF) serves as a coordination point for NAD(+).

This sequence belongs to the MnmG family. As to quaternary structure, homodimer. Heterotetramer of two MnmE and two MnmG subunits. Requires FAD as cofactor.

It localises to the cytoplasm. Functionally, NAD-binding protein involved in the addition of a carboxymethylaminomethyl (cmnm) group at the wobble position (U34) of certain tRNAs, forming tRNA-cmnm(5)s(2)U34. This chain is tRNA uridine 5-carboxymethylaminomethyl modification enzyme MnmG, found in Treponema pallidum (strain Nichols).